The following is a 429-amino-acid chain: C4-dicarboxylate transport protein (429 aa).

8 consecutive transmembrane segments (helical) span residues 9–29, 45–65, 79–99, 149–169, 185–205, 223–243, 308–328, and 356–376; these read VLYV…HFYP, LIKM…IAGM, LLYF…ATHI, GEIL…AHLG, VLFG…FGAM, LIGT…GTIA, IYMT…LTWM, and AATL…ILGI.

This sequence belongs to the dicarboxylate/amino acid:cation symporter (DAACS) (TC 2.A.23) family.

Its subcellular location is the cell inner membrane. In terms of biological role, responsible for the transport of dicarboxylates such as succinate, fumarate, and malate from the periplasm across the membrane. In Burkholderia ambifaria (strain MC40-6), this protein is C4-dicarboxylate transport protein.